The chain runs to 537 residues: CTP synthase (537 aa).

The tract at residues Met1–Leu268 is amidoligase domain. Ser14 is a binding site for CTP. Ser14 provides a ligand contact to UTP. Residue Ser15–Leu20 participates in ATP binding. L-glutamine is bound at residue Tyr55. Asp72 lines the ATP pocket. Asp72 and Glu142 together coordinate Mg(2+). CTP is bound by residues Asp149 to Glu151, Lys188 to Gln193, and Lys224. UTP-binding positions include Lys188 to Gln193 and Lys224. The 240-residue stretch at Arg294 to Asn533 folds into the Glutamine amidotransferase type-1 domain. Residue Gly353 participates in L-glutamine binding. Cys380 acts as the Nucleophile; for glutamine hydrolysis in catalysis. Residues Leu381 to Gln384, Glu404, and Arg461 contribute to the L-glutamine site. Residues His506 and Glu508 contribute to the active site.

Belongs to the CTP synthase family. As to quaternary structure, homotetramer.

It carries out the reaction UTP + L-glutamine + ATP + H2O = CTP + L-glutamate + ADP + phosphate + 2 H(+). The enzyme catalyses L-glutamine + H2O = L-glutamate + NH4(+). It catalyses the reaction UTP + NH4(+) + ATP = CTP + ADP + phosphate + 2 H(+). It functions in the pathway pyrimidine metabolism; CTP biosynthesis via de novo pathway; CTP from UDP: step 2/2. With respect to regulation, allosterically activated by GTP, when glutamine is the substrate; GTP has no effect on the reaction when ammonia is the substrate. The allosteric effector GTP functions by stabilizing the protein conformation that binds the tetrahedral intermediate(s) formed during glutamine hydrolysis. Inhibited by the product CTP, via allosteric rather than competitive inhibition. Catalyzes the ATP-dependent amination of UTP to CTP with either L-glutamine or ammonia as the source of nitrogen. Regulates intracellular CTP levels through interactions with the four ribonucleotide triphosphates. The polypeptide is CTP synthase (Chlamydia caviae (strain ATCC VR-813 / DSM 19441 / 03DC25 / GPIC) (Chlamydophila caviae)).